The primary structure comprises 255 residues: Large ribosomal subunit protein uL4 (255 aa).

Belongs to the universal ribosomal protein uL4 family. In terms of assembly, part of the 50S ribosomal subunit.

Functionally, one of the primary rRNA binding proteins, this protein initially binds near the 5'-end of the 23S rRNA. It is important during the early stages of 50S assembly. It makes multiple contacts with different domains of the 23S rRNA in the assembled 50S subunit and ribosome. Its function is as follows. Forms part of the polypeptide exit tunnel. The polypeptide is Large ribosomal subunit protein uL4 (Thermoplasma acidophilum (strain ATCC 25905 / DSM 1728 / JCM 9062 / NBRC 15155 / AMRC-C165)).